The chain runs to 394 residues: Ceramide glucosyltransferase-A (394 aa).

At 1-10 (MAVLDLALQG) the chain is on the lumenal side. A helical membrane pass occupies residues 11–32 (LAIFGCVLFFVLWFMHFLSIVY). Residues 33–195 (TRLHLNKKIS…QVYFGTSHPR (163 aa)) lie on the Cytoplasmic side of the membrane. Position 92 (aspartate 92) is a short sequence motif, D1. Aspartate 144 is a short sequence motif (D2). The chain crosses the membrane as a helical span at residues 196 to 215 (SYISANVTGFKCVTGMSCLM). Topologically, residues 216 to 287 (RKEVLDQAGG…KLRINMLPAT (72 aa)) are lumenal. Aspartate 236 is a short sequence motif (D3). Aspartate 236 (proton acceptor) is an active-site residue. The (Q/R)XXRW motif lies at 272-276 (RMIRW). Residues 288–304 (IICEPISECFVASLIIG) form a helical membrane-spanning segment. At 305-309 (WAAHH) the chain is on the cytoplasmic side. A helical transmembrane segment spans residues 310–328 (IFRWDIMVFFMCHCLAWFI). At 329–348 (FDYIQLRGVQGGPLNFSKLD) the chain is on the lumenal side. A helical transmembrane segment spans residues 349 to 369 (YAVAWFIRESMTIYIFLSALW). The Cytoplasmic segment spans residues 370 to 394 (DPTISWRTGRFRLRCGGTAEEILDV).

Belongs to the glycosyltransferase 2 family. At the late gastrula stage, weakly expressed ubiquitously. As neurulation proceeds (stages 15-16), expression moves towards the dorsal structures: involuted paraxial mesoderm and neural folds. In the tailbud embryo (stage 28), expression is restricted to the notochord. At later stages (stage 35), expression remains in the notochord and also appears weakly in the cephalic region.

Its subcellular location is the golgi apparatus membrane. It carries out the reaction an N-acylsphing-4-enine + UDP-alpha-D-glucose = a beta-D-glucosyl-(1&lt;-&gt;1')-N-acylsphing-4-enine + UDP + H(+). The enzyme catalyses UDP-alpha-D-xylose + an N-acylsphing-4-enine = a beta-D-xylosyl-(1&lt;-&gt;1')-N-acylsphing-4-enine + UDP + H(+). It catalyses the reaction N-(9Z-octadecenoyl)-sphing-4-enine + UDP-alpha-D-xylose = beta-D-xylosyl-(1&lt;-&gt;1')-N-(9Z-octadecenoyl)-sphing-4-enine + UDP + H(+). It participates in lipid metabolism; sphingolipid metabolism. Its function is as follows. Participates in the initial step of the glucosylceramide-based glycosphingolipid/GSL synthetic pathway at the cytosolic surface of the Golgi. Catalyzes the transfer of glucose from UDP-glucose to ceramide to produce glucosylceramide/GlcCer (such as beta-D-glucosyl-(1&lt;-&gt;1')-N-acylsphing-4-enine). Glucosylceramide is the core component of glycosphingolipids/GSLs, amphipathic molecules consisting of a ceramide lipid moiety embedded in the outer leaflet of the membrane, linked to one of hundreds of different externally oriented oligosaccharide structures. Glycosphingolipids are essential components of membrane microdomains that mediate membrane trafficking and signal transduction. They are implicated in many fundamental cellular processes, including growth, differentiation, migration, morphogenesis, cell-to-cell and cell-to-matrix interactions. Glycosphingolipids are required for convergence extension movements during early development. Catalyzes the synthesis of xylosylceramide/XylCer (such as beta-D-xylosyl-(1&lt;-&gt;1')-N-acylsphing-4-enine) using UDP-Xyl as xylose donor. In Xenopus laevis (African clawed frog), this protein is Ceramide glucosyltransferase-A (ugcg-a).